The chain runs to 128 residues: Ribosome-binding factor A (128 aa).

It belongs to the RbfA family. As to quaternary structure, monomer. Binds 30S ribosomal subunits, but not 50S ribosomal subunits or 70S ribosomes.

It localises to the cytoplasm. Functionally, one of several proteins that assist in the late maturation steps of the functional core of the 30S ribosomal subunit. Associates with free 30S ribosomal subunits (but not with 30S subunits that are part of 70S ribosomes or polysomes). Required for efficient processing of 16S rRNA. May interact with the 5'-terminal helix region of 16S rRNA. The polypeptide is Ribosome-binding factor A (Haemophilus influenzae (strain ATCC 51907 / DSM 11121 / KW20 / Rd)).